Consider the following 160-residue polypeptide: Cytochrome b6-f complex subunit 4 (160 aa).

The next 3 helical transmembrane spans lie at 36-56 (LLYMFPVVIFGSFACVIGLAV), 95-115 (LLGVLLMAAVPAGLLTVPFIE), and 131-151 (TVFLIGTFAAIWLGIGACLPI).

The protein belongs to the cytochrome b family. PetD subfamily. In terms of assembly, the 4 large subunits of the cytochrome b6-f complex are cytochrome b6, subunit IV (17 kDa polypeptide, petD), cytochrome f and the Rieske protein, while the 4 small subunits are petG, petL, petM and petN. The complex functions as a dimer.

The protein localises to the plastid. The protein resides in the chloroplast thylakoid membrane. Its function is as follows. Component of the cytochrome b6-f complex, which mediates electron transfer between photosystem II (PSII) and photosystem I (PSI), cyclic electron flow around PSI, and state transitions. This Tupiella akineta (Green alga) protein is Cytochrome b6-f complex subunit 4.